We begin with the raw amino-acid sequence, 30 residues long: Dermaseptin-3.1TR (30 aa).

As to expression, expressed by the skin glands.

It localises to the secreted. Its function is as follows. Has antimicrobial activity. This is Dermaseptin-3.1TR from Phyllomedusa trinitatis (Trinidad leaf frog).